The primary structure comprises 673 residues: RAS guanyl-releasing protein 4 (673 aa).

Composition is skewed to basic residues over residues 1 to 10 and 20 to 32; these read MNRKDSKRKS and GRGR…RHKT. Disordered stretches follow at residues 1–34 and 162–188; these read MNRK…KTCP and QSLG…PGLG. The 124-residue stretch at 49-172 folds into the N-terminal Ras-GEF domain; that stretch reads GMLNEGGCSE…SLGDFSSRLS (124 aa). Positions 201 to 432 constitute a Ras-GEF domain; that stretch reads ETGELAEHLT…YELSYAREPR (232 aa). The EF-hand domain maps to 466–501; the sequence is HVEQLVESVFKNYDPDGRGTISQEDFERLSGNFPFA. The Phorbol-ester/DAG-type zinc finger occupies 540–590; it reads LHTFQEVTFRKPTFCNSCSGFLWGVTKQGYRCRDCGLCCHRHCRDQVKVEC. 2 disordered regions span residues 593–618 and 638–673; these read RPGA…ASCG and RHAW…KLNS. Residues 603-612 are compositionally biased toward pro residues; the sequence is PEAPVPPTPV.

The protein belongs to the RASGRP family.

It localises to the cytoplasm. The protein resides in the cell membrane. Functions as a cation- and diacylglycerol (DAG)-regulated nucleotide exchange factor activating Ras through the exchange of bound GDP for GTP. In neutrophils, participates in a phospholipase C-activating N-formyl peptide-activated GPCR (G protein-coupled receptor) signaling pathway by promoting Ras-mediated activation of PIK3CG/PI3Kgamma to promote neutrophil functional responses. In CD117(+) dendritic cells and mast cells, participates in an lipopolysaccharide (LPS)-activated signaling pathway that stimulates the production of interferon-gamma and other pro-inflammatory cytokines by natural killer (NK) cells. May function in mast cell differentiation. Does not appear to be required for the development of B-cells, DC-cells, T-cells, or NK-cells. The polypeptide is RAS guanyl-releasing protein 4 (RASGRP4) (Bos taurus (Bovine)).